The primary structure comprises 324 residues: Quinolinate synthase (324 aa).

Iminosuccinate is bound by residues His39 and Ser56. Residue Cys101 coordinates [4Fe-4S] cluster. Residues 127–129 (YIN) and Ser144 each bind iminosuccinate. Cys187 lines the [4Fe-4S] cluster pocket. Iminosuccinate is bound by residues 213-215 (HPE) and Thr230. Cys280 serves as a coordination point for [4Fe-4S] cluster.

It belongs to the quinolinate synthase family. Type 2 subfamily. It depends on [4Fe-4S] cluster as a cofactor.

The protein localises to the cytoplasm. The enzyme catalyses iminosuccinate + dihydroxyacetone phosphate = quinolinate + phosphate + 2 H2O + H(+). The protein operates within cofactor biosynthesis; NAD(+) biosynthesis; quinolinate from iminoaspartate: step 1/1. Its function is as follows. Catalyzes the condensation of iminoaspartate with dihydroxyacetone phosphate to form quinolinate. The sequence is that of Quinolinate synthase from Nostoc sp. (strain PCC 7120 / SAG 25.82 / UTEX 2576).